The primary structure comprises 62 residues: Photosystem II reaction center protein Z (62 aa).

Transmembrane regions (helical) follow at residues 8-28 (ALFA…IVFA) and 41-61 (FSGT…NSLI).

The protein belongs to the PsbZ family. PSII is composed of 1 copy each of membrane proteins PsbA, PsbB, PsbC, PsbD, PsbE, PsbF, PsbH, PsbI, PsbJ, PsbK, PsbL, PsbM, PsbT, PsbY, PsbZ, Psb30/Ycf12, at least 3 peripheral proteins of the oxygen-evolving complex and a large number of cofactors. It forms dimeric complexes.

The protein localises to the plastid. The protein resides in the chloroplast thylakoid membrane. Functionally, may control the interaction of photosystem II (PSII) cores with the light-harvesting antenna, regulates electron flow through the 2 photosystem reaction centers. PSII is a light-driven water plastoquinone oxidoreductase, using light energy to abstract electrons from H(2)O, generating a proton gradient subsequently used for ATP formation. The chain is Photosystem II reaction center protein Z from Drimys granadensis.